The sequence spans 154 residues: Protein X (154 aa).

The interval proline 68–phenylalanine 117 is mitochondrial targeting sequence.

It belongs to the orthohepadnavirus protein X family. As to quaternary structure, may form homodimer. May interact with host CEBPA, CFLAR, CREB1, DDB1, E4F1, HBXIP, HSPD1/HSP60, NFKBIA, POLR2E and SMAD4. Interacts with host SMC5-SMC6 complex and induces its degradation. Interacts with host TRPC4AP; leading to prevent ubiquitination of TRPC4AP. Interacts with host PLSCR1; this interaction promotes ubiquitination and degradation of HBx and impairs HBx-mediated cell proliferation. A fraction may be phosphorylated in insect cells and HepG2 cells, a human hepatoblastoma cell line. Phosphorylated in vitro by host protein kinase C or mitogen-activated protein kinase. N-acetylated in insect cells.

It localises to the host cytoplasm. Its subcellular location is the host nucleus. The protein resides in the host mitochondrion. Multifunctional protein that plays a role in silencing host antiviral defenses and promoting viral transcription. Does not seem to be essential for HBV infection. May be directly involved in development of cirrhosis and liver cancer (hepatocellular carcinoma). Most of cytosolic activities involve modulation of cytosolic calcium. The effect on apoptosis is controversial depending on the cell types in which the studies have been conducted. May induce apoptosis by localizing in mitochondria and causing loss of mitochondrial membrane potential. May also modulate apoptosis by binding host CFLAR, a key regulator of the death-inducing signaling complex (DISC). Promotes viral transcription by using the host E3 ubiquitin ligase DDB1 to target the SMC5-SMC6 complex to proteasomal degradation. This host complex would otherwise bind to viral episomal DNA, and prevents its transcription. Moderately stimulates transcription of many different viral and cellular transcription elements. Promoters and enhancers stimulated by HBx contain DNA binding sites for NF-kappa-B, AP-1, AP-2, c-EBP, ATF/CREB, or the calcium-activated factor NF-AT. In Hepatitis B virus genotype E subtype ayw4 (isolate Kou) (HBV-E), this protein is Protein X.